The following is a 343-amino-acid chain: Holliday junction branch migration complex subunit RuvB (343 aa).

Residues 1 to 182 (MRDELLNTPT…FGISNRLDYY (182 aa)) form a large ATPase domain (RuvB-L) region. ATP contacts are provided by residues isoleucine 21, arginine 22, glycine 63, lysine 66, threonine 67, threonine 68, 129–131 (EDF), arginine 172, tyrosine 182, and arginine 219. Threonine 67 serves as a coordination point for Mg(2+). Positions 183-253 (SAELLQRIII…LARKTLAALE (71 aa)) are small ATPAse domain (RuvB-S). A head domain (RuvB-H) region spans residues 256 to 343 (EDGLDDMDKK…DGPLFQKGSS (88 aa)). DNA contacts are provided by arginine 311 and arginine 316.

Belongs to the RuvB family. Homohexamer. Forms an RuvA(8)-RuvB(12)-Holliday junction (HJ) complex. HJ DNA is sandwiched between 2 RuvA tetramers; dsDNA enters through RuvA and exits via RuvB. An RuvB hexamer assembles on each DNA strand where it exits the tetramer. Each RuvB hexamer is contacted by two RuvA subunits (via domain III) on 2 adjacent RuvB subunits; this complex drives branch migration. In the full resolvosome a probable DNA-RuvA(4)-RuvB(12)-RuvC(2) complex forms which resolves the HJ.

Its subcellular location is the cytoplasm. It catalyses the reaction ATP + H2O = ADP + phosphate + H(+). The RuvA-RuvB-RuvC complex processes Holliday junction (HJ) DNA during genetic recombination and DNA repair, while the RuvA-RuvB complex plays an important role in the rescue of blocked DNA replication forks via replication fork reversal (RFR). RuvA specifically binds to HJ cruciform DNA, conferring on it an open structure. The RuvB hexamer acts as an ATP-dependent pump, pulling dsDNA into and through the RuvAB complex. RuvB forms 2 homohexamers on either side of HJ DNA bound by 1 or 2 RuvA tetramers; 4 subunits per hexamer contact DNA at a time. Coordinated motions by a converter formed by DNA-disengaged RuvB subunits stimulates ATP hydrolysis and nucleotide exchange. Immobilization of the converter enables RuvB to convert the ATP-contained energy into a lever motion, pulling 2 nucleotides of DNA out of the RuvA tetramer per ATP hydrolyzed, thus driving DNA branch migration. The RuvB motors rotate together with the DNA substrate, which together with the progressing nucleotide cycle form the mechanistic basis for DNA recombination by continuous HJ branch migration. Branch migration allows RuvC to scan DNA until it finds its consensus sequence, where it cleaves and resolves cruciform DNA. The sequence is that of Holliday junction branch migration complex subunit RuvB from Prosthecochloris aestuarii (strain DSM 271 / SK 413).